We begin with the raw amino-acid sequence, 1357 residues long: DNA-directed RNA polymerase subunit beta (1357 aa).

This sequence belongs to the RNA polymerase beta chain family. The RNAP catalytic core consists of 2 alpha, 1 beta, 1 beta' and 1 omega subunit. When a sigma factor is associated with the core the holoenzyme is formed, which can initiate transcription.

The catalysed reaction is RNA(n) + a ribonucleoside 5'-triphosphate = RNA(n+1) + diphosphate. Functionally, DNA-dependent RNA polymerase catalyzes the transcription of DNA into RNA using the four ribonucleoside triphosphates as substrates. The chain is DNA-directed RNA polymerase subunit beta from Pseudomonas fluorescens (strain Pf0-1).